The following is a 386-amino-acid chain: ORC1-type DNA replication protein 3 (386 aa).

ATP contacts are provided by residues 65–69 (TGKTF) and Tyr-206.

This sequence belongs to the CDC6/cdc18 family.

Functionally, involved in regulation of DNA replication. The protein is ORC1-type DNA replication protein 3 (cdc6-3) of Sulfurisphaera tokodaii (strain DSM 16993 / JCM 10545 / NBRC 100140 / 7) (Sulfolobus tokodaii).